A 111-amino-acid chain; its full sequence is Probable 4-amino-4-deoxy-L-arabinose-phosphoundecaprenol flippase subunit ArnE (111 aa).

The Cytoplasmic portion of the chain corresponds to 1–35 (MIWLTLVFASLLSVAGQLCQKQATCFATVNKRRKH). The helical transmembrane segment at 36-56 (IVLWLGLALACLGLAMVLWLL) threads the bilayer. The EamA domain occupies 40–109 (LGLALACLGL…IIGGIVILGS (70 aa)). Topologically, residues 57-60 (VLQN) are periplasmic. A helical membrane pass occupies residues 61 to 81 (VPVGIAYPMLSLNFVWVTLAA). Over 82–87 (VKLWHE) the chain is Cytoplasmic. The chain crosses the membrane as a helical span at residues 88 to 108 (PVSLRHWCGVAFIIGGIVILG). Residues 109–111 (STV) lie on the Periplasmic side of the membrane.

Belongs to the ArnE family. As to quaternary structure, heterodimer of ArnE and ArnF.

The protein localises to the cell inner membrane. It participates in bacterial outer membrane biogenesis; lipopolysaccharide biosynthesis. Translocates 4-amino-4-deoxy-L-arabinose-phosphoundecaprenol (alpha-L-Ara4N-phosphoundecaprenol) from the cytoplasmic to the periplasmic side of the inner membrane. This chain is Probable 4-amino-4-deoxy-L-arabinose-phosphoundecaprenol flippase subunit ArnE, found in Escherichia coli O6:H1 (strain CFT073 / ATCC 700928 / UPEC).